The primary structure comprises 439 residues: uncharacterized protein (439 aa).

The signal sequence occupies residues 1-22 (MWVALKRFGFLSGLLALTVLSA). Cys23 is lipidated: N-palmitoyl cysteine. Residue Cys23 is the site of S-diacylglycerol cysteine attachment.

This sequence belongs to the MG067/MG068/MG395 family.

The protein resides in the cell membrane. This is an uncharacterized protein from Mycoplasma pneumoniae (strain ATCC 29342 / M129 / Subtype 1) (Mycoplasmoides pneumoniae).